Consider the following 186-residue polypeptide: Nascent polypeptide-associated complex subunit beta (186 aa).

The NAC-A/B domain occupies 65–130; it reads GADDKKLQTT…GEEKELTELV (66 aa). The interval 153 to 186 is disordered; the sequence is QNMQKQAGAEGKKDEDEDDIPDLVEGENFESNVE. Over residues 167–186 the composition is skewed to acidic residues; sequence EDEDDIPDLVEGENFESNVE.

It belongs to the NAC-beta family. In terms of assembly, part of the nascent polypeptide-associated complex (NAC), consisting of egd2 and egd1. NAC associates with ribosomes via egd1.

It localises to the cytoplasm. The protein resides in the nucleus. In terms of biological role, component of the nascent polypeptide-associated complex (NAC), a dynamic component of the ribosomal exit tunnel, protecting the emerging polypeptides from interaction with other cytoplasmic proteins to ensure appropriate nascent protein targeting. The NAC complex also promotes mitochondrial protein import by enhancing productive ribosome interactions with the outer mitochondrial membrane and blocks the inappropriate interaction of ribosomes translating non-secretory nascent polypeptides with translocation sites in the membrane of the endoplasmic reticulum. EGD1 may act as a transcription factor that exert a negative effect on the expression of several genes that are transcribed by RNA polymerase II. In Aspergillus fumigatus (strain ATCC MYA-4609 / CBS 101355 / FGSC A1100 / Af293) (Neosartorya fumigata), this protein is Nascent polypeptide-associated complex subunit beta (egd1).